The sequence spans 275 residues: Nitrogenase iron protein 1 (275 aa).

9–16 (GKGGIGKS) contributes to the ATP binding site. C97 contributes to the [4Fe-4S] cluster binding site. R100 is modified (ADP-ribosylarginine; by dinitrogenase reductase ADP-ribosyltransferase). Position 132 (C132) interacts with [4Fe-4S] cluster.

The protein belongs to the NifH/BchL/ChlL family. As to quaternary structure, homodimer. It depends on [4Fe-4S] cluster as a cofactor. The reversible ADP-ribosylation of Arg-100 inactivates the nitrogenase reductase and regulates nitrogenase activity.

The catalysed reaction is N2 + 8 reduced [2Fe-2S]-[ferredoxin] + 16 ATP + 16 H2O = H2 + 8 oxidized [2Fe-2S]-[ferredoxin] + 2 NH4(+) + 16 ADP + 16 phosphate + 6 H(+). Functionally, the key enzymatic reactions in nitrogen fixation are catalyzed by the nitrogenase complex, which has 2 components: the iron protein and the molybdenum-iron protein. In Methanosarcina barkeri, this protein is Nitrogenase iron protein 1 (nifH1).